Consider the following 550-residue polypeptide: Zinc finger protein squeeze (550 aa).

Over residues 73–105 the composition is skewed to low complexity; sequence QQQQQQQQQEMLQQQQQHQAHQEQQQQQQQQQQ. Residues 73–179 are disordered; it reads QQQQQQQQQE…GGGGGDGDQS (107 aa). Residues 106-117 are compositionally biased toward basic residues; the sequence is QHHHQQQQHHLK. Over residues 141–156 the composition is skewed to polar residues; the sequence is RSPQRPLMSSGSNASS. Residues 164–176 show a composition bias toward gly residues; it reads SGGGPGGGGGGDG. 5 C2H2-type zinc fingers span residues 182–204, 210–232, 238–262, 268–290, and 299–321; these read YKCA…TRIH, YRCE…IRTH, YKCR…SRCH, FKCN…IPKH, and HICN…LQKH. A disordered region spans residues 399–485; it reads LQQHQQQQQQ…VPPSHLQQHR (87 aa). The span at 400–416 shows a compositional bias: low complexity; it reads QQHQQQQQQQQQDMLQQ. At T424 the chain carries Phosphothreonine. 2 positions are modified to phosphoserine: S428 and S430. Residues 444-460 show a composition bias toward low complexity; it reads QTTPQHHLQQQQQQQQP. 2 positions are modified to phosphotyrosine: Y494 and Y496.

Belongs to the krueppel C2H2-type zinc-finger protein family. In terms of assembly, interacts with nab; which acts as a coactivator. Interacts with ap.

It localises to the nucleus. Functionally, transcription factor involved in neuronal fate specification. First required in embryonic CNS development to define the number of cells that express apterous (ap) in the ap thoracic cluster of interneurons. Later on, it plays a central role in the combinatorial code of transcription factors that specifies the fate of the Tv neuron in the ap cluster by participating in the transcription regulation of FMRFa in Tv cells. Also required for projection neuron dendritic targeting. In Drosophila pseudoobscura pseudoobscura (Fruit fly), this protein is Zinc finger protein squeeze (sqz).